Consider the following 72-residue polypeptide: uncharacterized protein (72 aa).

The protein resides in the plastid. The protein localises to the chloroplast. This is an uncharacterized protein from Oenothera berteroana (Bertero's evening primrose).